The chain runs to 146 residues: Phospholipase A2 PS22 (146 aa).

Positions 1–19 (MYPAHLLVLLAVCVSLLGA) are cleaved as a signal peptide. The propeptide occupies 20–27 (ASVPPQPL). 7 disulfide bridges follow: C38–C98, C54–C145, C56–C72, C71–C126, C78–C119, C87–C112, and C105–C117. Residues Y55, G57, and G59 each coordinate Ca(2+). H75 is an active-site residue. Residue D76 coordinates Ca(2+). Residue D120 is part of the active site.

It belongs to the phospholipase A2 family. Group I subfamily. D49 sub-subfamily. Ca(2+) is required as a cofactor. In terms of tissue distribution, expressed by the venom gland.

The protein resides in the secreted. The enzyme catalyses a 1,2-diacyl-sn-glycero-3-phosphocholine + H2O = a 1-acyl-sn-glycero-3-phosphocholine + a fatty acid + H(+). In terms of biological role, snake venom phospholipase A2 (PLA2) that inhibits collagen-induced platelet aggregation. PLA2 catalyzes the calcium-dependent hydrolysis of the 2-acyl groups in 3-sn-phosphoglycerides. The chain is Phospholipase A2 PS22 from Drysdalia coronoides (White-lipped snake).